The sequence spans 306 residues: Protoheme IX farnesyltransferase (306 aa).

A run of 9 helical transmembrane segments spans residues 28 to 48 (LGLV…AIML), 53 to 73 (FLSS…IMAG), 105 to 125 (ASIL…LFTI), 127 to 147 (IETG…YSVW), 156 to 176 (TIIG…AIEP), 182 to 202 (AWML…ALAI), 227 to 244 (LSML…FFMQ), 246 to 266 (LGTV…LLAI), and 283 to 303 (FVYS…VTLI).

It belongs to the UbiA prenyltransferase family. Protoheme IX farnesyltransferase subfamily. In terms of assembly, interacts with CtaA.

It localises to the cell membrane. It carries out the reaction heme b + (2E,6E)-farnesyl diphosphate + H2O = Fe(II)-heme o + diphosphate. It participates in porphyrin-containing compound metabolism; heme O biosynthesis; heme O from protoheme: step 1/1. Its function is as follows. Converts heme B (protoheme IX) to heme O by substitution of the vinyl group on carbon 2 of heme B porphyrin ring with a hydroxyethyl farnesyl side group. The sequence is that of Protoheme IX farnesyltransferase from Macrococcus caseolyticus (strain JCSC5402) (Macrococcoides caseolyticum).